The chain runs to 60 residues: Large ribosomal subunit protein uL30 (60 aa).

The protein belongs to the universal ribosomal protein uL30 family. As to quaternary structure, part of the 50S ribosomal subunit.

This chain is Large ribosomal subunit protein uL30, found in Streptococcus mutans serotype c (strain ATCC 700610 / UA159).